We begin with the raw amino-acid sequence, 358 residues long: Alanine racemase (358 aa).

Catalysis depends on Lys35, which acts as the Proton acceptor; specific for D-alanine. Lys35 carries the post-translational modification N6-(pyridoxal phosphate)lysine. Arg130 serves as a coordination point for substrate. Tyr255 functions as the Proton acceptor; specific for L-alanine in the catalytic mechanism. Met303 contributes to the substrate binding site.

Belongs to the alanine racemase family. The cofactor is pyridoxal 5'-phosphate.

The enzyme catalyses L-alanine = D-alanine. It functions in the pathway amino-acid biosynthesis; D-alanine biosynthesis; D-alanine from L-alanine: step 1/1. Catalyzes the interconversion of L-alanine and D-alanine. May also act on other amino acids. The polypeptide is Alanine racemase (alr) (Shewanella sp. (strain MR-7)).